The sequence spans 115 residues: Large ribosomal subunit protein bL19 (115 aa).

This sequence belongs to the bacterial ribosomal protein bL19 family.

In terms of biological role, this protein is located at the 30S-50S ribosomal subunit interface and may play a role in the structure and function of the aminoacyl-tRNA binding site. The chain is Large ribosomal subunit protein bL19 from Pectobacterium carotovorum subsp. carotovorum (strain PC1).